Reading from the N-terminus, the 146-residue chain is D-aminoacyl-tRNA deacylase (146 aa).

A Gly-cisPro motif, important for rejection of L-amino acids motif is present at residues 138–139; sequence GP.

The protein belongs to the DTD family. As to quaternary structure, homodimer.

Its subcellular location is the cytoplasm. The enzyme catalyses glycyl-tRNA(Ala) + H2O = tRNA(Ala) + glycine + H(+). It carries out the reaction a D-aminoacyl-tRNA + H2O = a tRNA + a D-alpha-amino acid + H(+). Its function is as follows. An aminoacyl-tRNA editing enzyme that deacylates mischarged D-aminoacyl-tRNAs. Also deacylates mischarged glycyl-tRNA(Ala), protecting cells against glycine mischarging by AlaRS. Acts via tRNA-based rather than protein-based catalysis; rejects L-amino acids rather than detecting D-amino acids in the active site. By recycling D-aminoacyl-tRNA to D-amino acids and free tRNA molecules, this enzyme counteracts the toxicity associated with the formation of D-aminoacyl-tRNA entities in vivo and helps enforce protein L-homochirality. The polypeptide is D-aminoacyl-tRNA deacylase (Stenotrophomonas maltophilia (strain R551-3)).